The primary structure comprises 333 residues: Acetyltransferase Pat (333 aa).

3',5'-cyclic AMP is bound by residues 88-91, 98-99, and Arg-138; these read GEIA and RS. The N-acetyltransferase domain maps to 156–318; that stretch reads LMLRPVLPGD…GELSLGREMV (163 aa). Position 173 (His-173) interacts with substrate. Asp-214 is a binding site for Mg(2+). Residues 238–240, 246–251, Asn-277, and Arg-286 each bind substrate; these read FTV and GRGIGS.

In terms of assembly, homodimer. Mg(2+) serves as cofactor.

Autoinhibited and allosterically activated by 3,5-cyclic adenosine monophosphate (cAMP). An extensive conformational rearrangement relieves this autoinhibition by means of a substrate-mimicking lid that covers the protein-substrate binding surface. Its function is as follows. Catalyzes specifically the acetylation of the epsilon-amino group of a highly conserved lysine residue in acetyl-CoA synthetase (ACS). This acetylation results in the inactivation of ACS activity and could be important for mycobacteria to adjust to environmental changes. In Mycobacterium tuberculosis (strain ATCC 25618 / H37Rv), this protein is Acetyltransferase Pat.